The following is a 349-amino-acid chain: 4-hydroxy-2-oxovalerate aldolase 2 (349 aa).

Positions 12 to 264 (VRMTDTSLRD…KTGIDFFDIA (253 aa)) constitute a Pyruvate carboxyltransferase domain. 20 to 21 (RD) is a substrate binding site. Aspartate 21 serves as a coordination point for Mn(2+). The Proton acceptor role is filled by histidine 24. 2 residues coordinate substrate: serine 174 and histidine 203. Residues histidine 203 and histidine 205 each coordinate Mn(2+). Substrate is bound at residue tyrosine 294.

This sequence belongs to the 4-hydroxy-2-oxovalerate aldolase family.

The enzyme catalyses (S)-4-hydroxy-2-oxopentanoate = acetaldehyde + pyruvate. The sequence is that of 4-hydroxy-2-oxovalerate aldolase 2 (bphI-2) from Mycolicibacterium smegmatis (strain ATCC 700084 / mc(2)155) (Mycobacterium smegmatis).